A 275-amino-acid chain; its full sequence is Large ribosomal subunit protein uL2 (275 aa).

The segment at 210–275 (GRNRHRGIRP…DKLIISRKKK (66 aa)) is disordered. Over residues 257–275 (FKTRKKKASDKLIISRKKK) the composition is skewed to basic residues.

This sequence belongs to the universal ribosomal protein uL2 family. As to quaternary structure, part of the 50S ribosomal subunit. Forms a bridge to the 30S subunit in the 70S ribosome.

In terms of biological role, one of the primary rRNA binding proteins. Required for association of the 30S and 50S subunits to form the 70S ribosome, for tRNA binding and peptide bond formation. It has been suggested to have peptidyltransferase activity; this is somewhat controversial. Makes several contacts with the 16S rRNA in the 70S ribosome. The sequence is that of Large ribosomal subunit protein uL2 from Helicobacter hepaticus (strain ATCC 51449 / 3B1).